A 205-amino-acid polypeptide reads, in one-letter code: uncharacterized protein (205 aa).

The 82-residue stretch at 1-82 (MIKVYGVPGW…MVLDRRPDLA (82 aa)) folds into the GST N-terminal domain. Glutathione is bound by residues V53 and 66-67 (ET). Residues 86-205 (GRAERQLFQR…QEVLKRNEII (120 aa)) enclose the GST C-terminal domain.

Belongs to the GST superfamily. Beta family.

This is an uncharacterized protein from Escherichia coli (strain K12).